Here is a 60-residue protein sequence, read N- to C-terminus: Large ribosomal subunit protein bL32 (60 aa).

A compositionally biased stretch (basic residues) spans 1 to 16; that stretch reads MAVPKRKTSPSKRGMR. The segment at 1–60 is disordered; sequence MAVPKRKTSPSKRGMRRSADALKAPTYVEDKNSGELRRPHHVDLKTGMYRGRQVLEPKEA. Positions 28-44 are enriched in basic and acidic residues; sequence VEDKNSGELRRPHHVDL.

This sequence belongs to the bacterial ribosomal protein bL32 family.

This is Large ribosomal subunit protein bL32 from Chelativorans sp. (strain BNC1).